The primary structure comprises 808 residues: DNA ligase (808 aa).

A disordered region spans residues 1-30 (MSISDDISPVPPAPVSEPNAGQDAGQDAAP). Over residues 18-30 (PNAGQDAGQDAAP) the composition is skewed to low complexity. Residues 61 to 65 (DAEYD), 110 to 111 (SL), and D141 each bind NAD(+). Catalysis depends on K143, which acts as the N6-AMP-lysine intermediate. Residues R164, E202, K334, and K358 each coordinate NAD(+). Zn(2+) is bound by residues C453, C456, C471, and C476. In terms of domain architecture, BRCT spans 644–733 (EGSGPLAGLR…GGDVPEDGDG (90 aa)). A disordered region spans residues 720 to 808 (LEGRGGDVPE…PRKKDQHSLL (89 aa)). Over residues 727 to 742 (VPEDGDGAPGNEDEAP) the composition is skewed to acidic residues. Over residues 746-773 (ADVPAAPEVLADAPAAISADASSGVAPG) the composition is skewed to low complexity. A compositionally biased stretch (basic and acidic residues) spans 779 to 792 (DRADMTDRTVRTDS).

It belongs to the NAD-dependent DNA ligase family. LigA subfamily. The cofactor is Mg(2+). Mn(2+) is required as a cofactor.

The enzyme catalyses NAD(+) + (deoxyribonucleotide)n-3'-hydroxyl + 5'-phospho-(deoxyribonucleotide)m = (deoxyribonucleotide)n+m + AMP + beta-nicotinamide D-nucleotide.. In terms of biological role, DNA ligase that catalyzes the formation of phosphodiester linkages between 5'-phosphoryl and 3'-hydroxyl groups in double-stranded DNA using NAD as a coenzyme and as the energy source for the reaction. It is essential for DNA replication and repair of damaged DNA. This Nitratidesulfovibrio vulgaris (strain DSM 19637 / Miyazaki F) (Desulfovibrio vulgaris) protein is DNA ligase.